We begin with the raw amino-acid sequence, 101 residues long: Small ribosomal subunit protein uS14 (101 aa).

The tract at residues 1–22 is disordered; the sequence is MAKVSSIKKNESRKKKSQSLHN. The segment covering 11-22 has biased composition (basic residues); sequence ESRKKKSQSLHN.

The protein belongs to the universal ribosomal protein uS14 family. Part of the 30S ribosomal subunit. Contacts proteins S3 and S10.

In terms of biological role, binds 16S rRNA, required for the assembly of 30S particles and may also be responsible for determining the conformation of the 16S rRNA at the A site. This chain is Small ribosomal subunit protein uS14, found in Rickettsia conorii (strain ATCC VR-613 / Malish 7).